The sequence spans 69 residues: MFTLKKSLLLLFFLGTINLSLCEQERNAEEERRDDDEMDVEVEKRFLPMLAGLAANFLPKIVCKITKKC.

The signal sequence occupies residues 1–22 (MFTLKKSLLLLFFLGTINLSLC). Positions 23-43 (EQERNAEEERRDDDEMDVEVE) are cleaved as a propeptide — removed in mature form. C63 and C69 form a disulfide bridge.

It belongs to the frog skin active peptide (FSAP) family. Brevinin subfamily. As to expression, expressed by the skin glands.

It is found in the secreted. Its function is as follows. Antimicrobial peptide active against a variety of Gram-positive and Gram-negative bacterial strains. Has antifungal activity against C.albicans ATCC 10231 and a slime mold isolate. Has hemolytic activity against human erythrocytes. The chain is Brevinin-1CG5 from Amolops chunganensis (Chungan torrent frog).